Consider the following 72-residue polypeptide: Prokaryotic ubiquitin-like protein Pup (72 aa).

Residues 1–10 (MATKDTGGGQ) show a composition bias toward gly residues. The disordered stretch occupies residues 1–45 (MATKDTGGGQQKATRSTEEVEEQAQDAQASEDLKERQEKLSDDVD). Positions 10-60 (QQKATRSTEEVEEQAQDAQASEDLKERQEKLSDDVDSVLDEIDDVLEENAE) form a coiled coil. Residues 28–66 (QASEDLKERQEKLSDDVDSVLDEIDDVLEENAEDFVRSF) are ARC ATPase binding. A compositionally biased stretch (basic and acidic residues) spans 31 to 42 (EDLKERQEKLSD). Glutamate 72 is covalently cross-linked (Isoglutamyl lysine isopeptide (Glu-Lys) (interchain with K-? in acceptor proteins)).

Belongs to the prokaryotic ubiquitin-like protein family. As to quaternary structure, strongly interacts with the proteasome-associated ATPase ARC through a hydrophobic interface; the interacting region of Pup lies in its C-terminal half. There is one Pup binding site per ARC hexamer ring.

It functions in the pathway protein degradation; proteasomal Pup-dependent pathway. Functionally, protein modifier that is covalently attached to lysine residues of substrate proteins, thereby targeting them for proteasomal degradation. The tagging system is termed pupylation. The chain is Prokaryotic ubiquitin-like protein Pup from Streptomyces coelicolor (strain ATCC BAA-471 / A3(2) / M145).